The following is a 350-amino-acid chain: Deoxyhypusine synthase-like protein (350 aa).

This sequence belongs to the deoxyhypusine synthase family.

The chain is Deoxyhypusine synthase-like protein from Chlorobaculum tepidum (strain ATCC 49652 / DSM 12025 / NBRC 103806 / TLS) (Chlorobium tepidum).